The sequence spans 581 residues: Solute carrier family 15 member 3 (581 aa).

The span at 1-14 (MPAPRAREQPRVPG) shows a compositional bias: basic and acidic residues. Residues 1-26 (MPAPRAREQPRVPGERQPLLPRGARG) form a disordered region. The helical transmembrane segment at 38-58 (VLLVEMLERAAFFGVTANLVL) threads the bilayer. N-linked (GlcNAc...) asparagine glycans are attached at residues N61 and N66. Helical transmembrane passes span 76-96 (ALVF…LADV), 103-123 (AVAL…ATAF), and 155-175 (PYCA…ASSV). An N-linked (GlcNAc...) asparagine glycan is attached at N178. Residues 200-220 (NWFYWSINLGAVLSLLVVAFI) form a helical membrane-spanning segment. Residue N223 is glycosylated (N-linked (GlcNAc...) asparagine). Transmembrane regions (helical) follow at residues 232-252 (IPVG…PVFI) and 310-330 (FQVL…WMVY). N356 is a glycosylation site (N-linked (GlcNAc...) asparagine). The next 2 helical transmembrane spans lie at 369-389 (TIPE…LVPL) and 411-431 (MALG…LEME). Residue N439 is glycosylated (N-linked (GlcNAc...) asparagine). Transmembrane regions (helical) follow at residues 458–478 (IWWQ…ASIP), 497–517 (GIFF…VALL), and 540–560 (LYFF…VWIA).

This sequence belongs to the major facilitator superfamily. Proton-dependent oligopeptide transporter (POT/PTR) (TC 2.A.17) family.

Its subcellular location is the lysosome membrane. The protein resides in the endosome membrane. It carries out the reaction glycylglycylglycine(out) + n H(+)(out) = glycylglycylglycine(in) + n H(+)(in). It catalyses the reaction carnosine(out) + n H(+)(out) = carnosine(in) + n H(+)(in). The catalysed reaction is L-histidine(out) + n H(+)(out) = L-histidine(in) + n H(+)(in). The enzyme catalyses N-acetyl-D-muramoyl-L-alanyl-D-isoglutamine(out) + n H(+)(out) = N-acetyl-D-muramoyl-L-alanyl-D-isoglutamine(in) + n H(+)(in). Its function is as follows. Proton-coupled amino-acid transporter that transports free histidine and certain di- and tripeptides, and is involved in innate immune response. Also able to transport carnosine. Involved in the detection of microbial pathogens by toll-like receptors (TLRs) and NOD-like receptors (NLRs), probably by mediating transport of bacterial peptidoglycans across the endolysosomal membrane: catalyzes the transport of certain bacterial peptidoglycans, such as muramyl dipeptide (MDP), the NOD2 ligand. This is Solute carrier family 15 member 3 from Homo sapiens (Human).